A 413-amino-acid chain; its full sequence is Protein trichome birefringence-like 9 (413 aa).

A helical; Signal-anchor for type II membrane protein transmembrane segment spans residues 22 to 42 (LFVSLFLLSLLIFSTVVVDVM). Residues 141-143 (GDS) carry the GDS motif motif. A DCXHWCLPGXXDXWN motif motif is present at residues 384 to 398 (DCSHWCLPGVPDTWN).

It belongs to the PC-esterase family. TBL subfamily.

The protein localises to the membrane. In terms of biological role, may act as a bridging protein that binds pectin and other cell wall polysaccharides. Probably involved in maintaining esterification of pectins. May be involved in the specific O-acetylation of cell wall polymers. In Arabidopsis thaliana (Mouse-ear cress), this protein is Protein trichome birefringence-like 9 (TBL9).